A 524-amino-acid polypeptide reads, in one-letter code: Peptide chain release factor 3 (524 aa).

The 269-residue stretch at 10–278 folds into the tr-type G domain; that stretch reads DSRRTFAIIS…TFLQFAPAPH (269 aa). Residues 19–26, 87–91, and 141–144 each bind GTP; these read SHPDAGKT, DTPGH, and NKLD.

The protein belongs to the TRAFAC class translation factor GTPase superfamily. Classic translation factor GTPase family. PrfC subfamily.

The protein localises to the cytoplasm. Increases the formation of ribosomal termination complexes and stimulates activities of RF-1 and RF-2. It binds guanine nucleotides and has strong preference for UGA stop codons. It may interact directly with the ribosome. The stimulation of RF-1 and RF-2 is significantly reduced by GTP and GDP, but not by GMP. The sequence is that of Peptide chain release factor 3 from Enterococcus faecalis (strain ATCC 700802 / V583).